The sequence spans 403 residues: GDSL esterase/lipase At1g28590 (403 aa).

Residues 1-27 (MASLDSLPAMKLVRFILSTLLVTSVNS) form the signal peptide. Serine 43 acts as the Nucleophile in catalysis. Asparagine 139 and asparagine 323 each carry an N-linked (GlcNAc...) asparagine glycan. Residues aspartate 346 and histidine 349 contribute to the active site.

It belongs to the 'GDSL' lipolytic enzyme family.

The protein resides in the secreted. The chain is GDSL esterase/lipase At1g28590 from Arabidopsis thaliana (Mouse-ear cress).